We begin with the raw amino-acid sequence, 91 residues long: uncharacterized protein (91 aa).

The first 25 residues, 1–25, serve as a signal peptide directing secretion; sequence MLLQRIGIEHLRIWILLLLISLVPA.

This is an uncharacterized protein from Caenorhabditis elegans.